Here is a 162-residue protein sequence, read N- to C-terminus: 2-C-methyl-D-erythritol 2,4-cyclodiphosphate synthase (162 aa).

D8 and H10 together coordinate a divalent metal cation. Residues 8 to 10 and 36 to 37 each bind 4-CDP-2-C-methyl-D-erythritol 2-phosphate; these read DVH and HS. Residue H44 participates in a divalent metal cation binding. Residues 58–60, 63–67, 102–108, 134–137, F141, and R144 contribute to the 4-CDP-2-C-methyl-D-erythritol 2-phosphate site; these read DIG, FPDTD, AQAPKMA, and TTTE.

The protein belongs to the IspF family. In terms of assembly, homotrimer. Requires a divalent metal cation as cofactor.

It catalyses the reaction 4-CDP-2-C-methyl-D-erythritol 2-phosphate = 2-C-methyl-D-erythritol 2,4-cyclic diphosphate + CMP. Its pathway is isoprenoid biosynthesis; isopentenyl diphosphate biosynthesis via DXP pathway; isopentenyl diphosphate from 1-deoxy-D-xylulose 5-phosphate: step 4/6. Its function is as follows. Involved in the biosynthesis of isopentenyl diphosphate (IPP) and dimethylallyl diphosphate (DMAPP), two major building blocks of isoprenoid compounds. Catalyzes the conversion of 4-diphosphocytidyl-2-C-methyl-D-erythritol 2-phosphate (CDP-ME2P) to 2-C-methyl-D-erythritol 2,4-cyclodiphosphate (ME-CPP) with a corresponding release of cytidine 5-monophosphate (CMP). This Yersinia pseudotuberculosis serotype IB (strain PB1/+) protein is 2-C-methyl-D-erythritol 2,4-cyclodiphosphate synthase.